The chain runs to 123 residues: Large ribosomal subunit protein uL14 (123 aa).

The protein belongs to the universal ribosomal protein uL14 family. In terms of assembly, part of the 50S ribosomal subunit. Forms a cluster with proteins L3 and L19. In the 70S ribosome, L14 and L19 interact and together make contacts with the 16S rRNA in bridges B5 and B8.

In terms of biological role, binds to 23S rRNA. Forms part of two intersubunit bridges in the 70S ribosome. This chain is Large ribosomal subunit protein uL14, found in Aliivibrio salmonicida (strain LFI1238) (Vibrio salmonicida (strain LFI1238)).